Reading from the N-terminus, the 911-residue chain is MAASVENRQYTHLEPGLSGVGRTFKPRPDSPVRGCNFPPSSNHELPFQKKQNPPIYLDYSSSEDEDDDDEKNEYVQMIKKGKTELEPSIHDTRDEGTADNWIERNFSLIRLTGKHPFNSEPPLSRLMHHGFITPVPLHYVRNHGPVPKASWSDWTVEVTGLVKRPMKFTMDQLVNEFPSREFPVTLVCAGNRRKEQNMVKQTIGFNWGAAAVSTTVWRGVPLRALLKRCGVQSKKKGALNVCFEGSDVLPGGGGSKYGTSIKKEFAMDPSRDIIVAYMQNGEMLSPDHGFPVRMIIPGFIGGRMVKWLKRIVVTTQESESYYHYKDNRVLPPHVDAELANAEAWWYKPEYIINELNINSVITTPCHEEILPINAWTTQRPYTLRGYAYSGGGKKVTRVEVTLDGGETWSVCTLDHPEKPTKYGKYWCWCFWSLEVEVLDLLSAKEIAVRATDETLNTQPEKLIWNVMGMMNNCWFRVKMNVCKPHKGEIGIVFEHPTQPGNQSGGWMAKERHLEISAVAPPTLKKSISTPFMNTASKMYSMSEVRKHNSSDSAWIIVHGHIYDASRFLKDHPGGVDSILINAGTDCTEEFDAIHSDKAKKLLEDFRIGELITTGYTSDSSPNSSVHGSSSISSFLAPIKELVQTPTRSVALIPREKIPCKLVDKQSISHDVRKFKFALPSEDQVLGLPVGKHIFLCATVDDKLCMRAYTPTSTVDEVGFFELVVKIYFKGVHPKFPNGGQMSQHLDSLPIGAFLDVKGPLGHIEYQGKGNFLVHGKQKFAKKLAMIAGGTGITPVYQVMQSILKDPEDDTEMYVVYANRTEDDILLKDELDAWAEQVPNRVKVWYVVQESITQGWKYSTGFVTESILREHIPEPSHTTLALACGPPPMIQFAINPNLEKMGYDIKEELLVF.

The span at 1–10 (MAASVENRQY) shows a compositional bias: polar residues. A disordered region spans residues 1–71 (MAASVENRQY…SEDEDDDDEK (71 aa)). The segment covering 61 to 71 (SSEDEDDDDEK) has biased composition (acidic residues). Cysteine 188 provides a ligand contact to Mo-molybdopterin. In terms of domain architecture, Cytochrome b5 heme-binding spans 536–611 (SKMYSMSEVR…LEDFRIGELI (76 aa)). Heme contacts are provided by histidine 571 and histidine 594. The region spanning 654–766 (REKIPCKLVD…KGPLGHIEYQ (113 aa)) is the FAD-binding FR-type domain. FAD contacts are provided by residues 706 to 709 (RAYT), 723 to 727 (VVKIY), phenylalanine 728, phenylalanine 735, 740 to 742 (QMS), and threonine 793.

This sequence belongs to the nitrate reductase family. As to quaternary structure, homodimer. Requires FAD as cofactor. The cofactor is heme. Mo-molybdopterin serves as cofactor.

It catalyses the reaction nitrite + NAD(+) + H2O = nitrate + NADH + H(+). Functionally, nitrate reductase is a key enzyme involved in the first step of nitrate assimilation in plants, fungi and bacteria. The protein is Nitrate reductase [NADH] (NIA) of Solanum lycopersicum (Tomato).